Consider the following 287-residue polypeptide: 3-beta-hydroxysteroid sulfotransferase (287 aa).

Position 44-49 (44-49 (KSGTNW)) interacts with 3'-phosphoadenylyl sulfate. Substrate-binding residues include W72 and W77. The active-site Proton acceptor is H99. 3'-phosphoadenylyl sulfate contacts are provided by residues R121, S129, Y184, 218-223 (SSFKFM), and 247-249 (RKG).

It belongs to the sulfotransferase 1 family. In terms of assembly, homodimer. In terms of tissue distribution, liver, intestine and kidney.

It is found in the cytoplasm. It catalyses the reaction an alcohol + 3'-phosphoadenylyl sulfate = an alkyl sulfate + adenosine 3',5'-bisphosphate + H(+). In terms of biological role, sulfotransferase that utilizes 3'-phospho-5'-adenylyl sulfate (PAPS) as sulfonate donor to catalyze the sulfonation of 3-beta-hydroxyl groups of neutral steroids. High preference for C21 steroid (pregnenolone). The sequence is that of 3-beta-hydroxysteroid sulfotransferase (STD2) from Cavia porcellus (Guinea pig).